We begin with the raw amino-acid sequence, 438 residues long: MARPLLGKTSSVRRRLESLSACSIFFFLRKFCQKMASLVFLNSPVYQMSNILLTERRQVDRAMGGSDDDGVMVVALSPSDFKTVLGSALLAVERDMVHVVPKYLQTPGILHDMLVLLTPIFGEALSVDMSGATDVMVQQIATAGFVDVDPLHSSVSWKDNVSCPVALLAVSNAVRTMMGQPCQVTLIIDVGTQNILRDLVNLPVEMSGDLQVMAYTKDPLGKVPAVGVSVFDSGSVQKGDAHSVGAPDGLVSFHTHPVSSAVELNYHAGWPSNVDMSSLLTMKNLMHVVVAEEGLWTMARTLSMQRLTKVLTDAEKDVMRAAAFNLFLPLNELRVMGTKDSNNKSLKTYFEVFETFTIGALMKHSGVTPTAFVDRRWLDNTIYHMGFIPWGRDMRFVVEYDLDGTNPFLNTVPTLMSVKRKAKIQEMFDNMVSRMVTS.

An N-terminal signal peptide occupies residues 1 to 32 (MARPLLGKTSSVRRRLESLSACSIFFFLRKFC).

This is an uncharacterized protein from Frog virus 3 (isolate Goorha) (FV-3).